The following is a 229-amino-acid chain: MATELTWHDVLADEKQQPYFINTLHTVAGERQSGITVYPPQKDVFNAFRFTELGDVKVVILGQDPYHGPGQAHGLAFSVRPGIAPPPSLVNMYKELEASIPGFVRPAHGYLESWARQGVLLLNTVLTVRAGQAHSHASLGWETFTDKVISLINQHREGVVFLLWGSHAQKKGAIIDPQRHHILKAPHPSPLSAHRGFFGCNHFALTNQWLEQHGEKTIDWTPVLPAESE.

Aspartate 64 serves as the catalytic Proton acceptor.

This sequence belongs to the uracil-DNA glycosylase (UDG) superfamily. UNG family.

Its subcellular location is the cytoplasm. It carries out the reaction Hydrolyzes single-stranded DNA or mismatched double-stranded DNA and polynucleotides, releasing free uracil.. Excises uracil residues from the DNA which can arise as a result of misincorporation of dUMP residues by DNA polymerase or due to deamination of cytosine. The protein is Uracil-DNA glycosylase of Salmonella choleraesuis (strain SC-B67).